The primary structure comprises 424 residues: Dehydrogenase FUM7 (424 aa).

Belongs to the iron-containing alcohol dehydrogenase family. The cofactor is Fe cation.

It participates in mycotoxin biosynthesis. Its function is as follows. Dehydrogenase; part of the gene cluster that mediates the biosynthesis of fumonisins B1 (FB1), B2 (FB2), B3 (FB3), and B4 (FB4), which are carcinogenic mycotoxins. Within the pathway, FUM7 is involved the addition of the tricarballylic moieties to the carbon backbone. FUM7 dehydrogenase removes the C-3 hydroxyl of citrate to form tricarballylic acid either before or after the CoA activation by the FUM10 acyl-CoA synthetase and FUM14 catalyzed esterification of CoA-activated tricarballylic acid to the C-14 and C-15 hydroxyls of the fumonisin backbone. The biosynthesis starts with the FUM1-catalyzed carbon chain assembly from one molecule of acetyl-CoA, eight molecules of malonyl-CoA, and two molecules of methionine (in S-adenosyl form). The C18 polyketide chain is released from the enzyme by a nucleophilic attack of a carbanion, which is derived from R-carbon of alanine by decarboxylation, on the carbonyl carbon of polyketide acyl chain. This step is catalyzed by the pyridoxal 5'-phosphate-dependent aminoacyl transferase FUM8. The resultant 3-keto intermediate is then stereospecifically reduced to a 3-hydroxyl product by reductase FUM13. Subsequent oxidations at C-10 by the cytochrome P450 monooxygenase FUM2, C-14 and C-15 by FUM6, FUM12 or FUM15, tricarballylic esterification of the hydroxyl groups on C-14 and C-15 by acyltransferase FUM14, and C-5 hydroxylation by 2-keto-glutarate-dependent dioxygenase FUM3 furnish the biosynthesis of fumonisins. The tricarballylic moieties are most likely derived from the citric acid cycle, and their addition to the carbon backbone may involve FUM7, FUM10, FUM11 and FUM14. This chain is Dehydrogenase FUM7, found in Gibberella moniliformis (strain M3125 / FGSC 7600) (Maize ear and stalk rot fungus).